The primary structure comprises 208 residues: Small ribosomal subunit protein uS4 (208 aa).

The S4 RNA-binding domain occupies 98 to 161 (RRLDNVIYRL…KESPRIKELL (64 aa)).

The protein belongs to the universal ribosomal protein uS4 family. In terms of assembly, part of the 30S ribosomal subunit. Contacts protein S5. The interaction surface between S4 and S5 is involved in control of translational fidelity.

In terms of biological role, one of the primary rRNA binding proteins, it binds directly to 16S rRNA where it nucleates assembly of the body of the 30S subunit. Its function is as follows. With S5 and S12 plays an important role in translational accuracy. This chain is Small ribosomal subunit protein uS4, found in Pelotomaculum thermopropionicum (strain DSM 13744 / JCM 10971 / SI).